A 212-amino-acid chain; its full sequence is High frequency lysogenization protein HflD homolog (212 aa).

This sequence belongs to the HflD family.

It is found in the cytoplasm. The protein localises to the cell inner membrane. The polypeptide is High frequency lysogenization protein HflD homolog (Pectobacterium carotovorum subsp. carotovorum (strain PC1)).